Reading from the N-terminus, the 367-residue chain is D-alanine--D-alanine ligase (367 aa).

One can recognise an ATP-grasp domain in the interval 150–357; that stretch reads KKLLASAGLP…YPTLLATMVE (208 aa). 178-233 serves as a coordination point for ATP; that stretch reads RERLGLPVFVKPSRGGSSIGVSRVTAWDELPAAIELARRHDPKVIIEAAVPGRELE. Mg(2+) is bound by residues Asp-312, Glu-324, and Asn-326.

Belongs to the D-alanine--D-alanine ligase family. Mg(2+) is required as a cofactor. Requires Mn(2+) as cofactor.

The protein resides in the cytoplasm. It catalyses the reaction 2 D-alanine + ATP = D-alanyl-D-alanine + ADP + phosphate + H(+). Its pathway is cell wall biogenesis; peptidoglycan biosynthesis. Its function is as follows. Cell wall formation. The protein is D-alanine--D-alanine ligase of Mycolicibacterium gilvum (strain PYR-GCK) (Mycobacterium gilvum (strain PYR-GCK)).